We begin with the raw amino-acid sequence, 367 residues long: Peptide chain release factor 2 (367 aa).

An N5-methylglutamine modification is found at glutamine 250.

Belongs to the prokaryotic/mitochondrial release factor family. Methylated by PrmC. Methylation increases the termination efficiency of RF2.

It is found in the cytoplasm. Its function is as follows. Peptide chain release factor 2 directs the termination of translation in response to the peptide chain termination codons UGA and UAA. The chain is Peptide chain release factor 2 from Mycobacteroides abscessus (strain ATCC 19977 / DSM 44196 / CCUG 20993 / CIP 104536 / JCM 13569 / NCTC 13031 / TMC 1543 / L948) (Mycobacterium abscessus).